A 186-amino-acid chain; its full sequence is Enhancer of split m7 protein (186 aa).

A bHLH domain is found at 13–68; sequence YRKVMKPLLERKRRARINKCLDELKDLMAECVAQTGDAKFEKADILEVTVQHLRKL. In terms of domain architecture, Orange spans 83 to 116; the sequence is FRAGYIRAANEVSRALASLPRVDVAFGTTLMTHL. The WRPW motif motif lies at 183–186; sequence WRPW.

As to quaternary structure, transcription repression requires formation of a complex with a corepressor protein (Groucho). Forms homodimers.

Its subcellular location is the nucleus. In terms of biological role, participates in the control of cell fate choice by uncommitted neuroectodermal cells in the embryo. Transcriptional repressor. Binds DNA on N-box motifs: 5'-CACNAG-3'. This Drosophila melanogaster (Fruit fly) protein is Enhancer of split m7 protein.